Consider the following 89-residue polypeptide: Small ribosomal subunit protein bS20 (89 aa).

The protein belongs to the bacterial ribosomal protein bS20 family.

In terms of biological role, binds directly to 16S ribosomal RNA. The chain is Small ribosomal subunit protein bS20 from Wolbachia pipientis subsp. Culex pipiens (strain wPip).